Consider the following 309-residue polypeptide: Golgi-associated RAB2 interactor protein 1A (309 aa).

Serine 231, serine 263, and serine 267 each carry phosphoserine.

It belongs to the GARIN family. Interacts (via N-terminus) with RAB2B (in GTP-bound form).

Its subcellular location is the golgi apparatus. Its function is as follows. RAB2B effector protein required for accurate acrosome formation and normal male fertility. The sequence is that of Golgi-associated RAB2 interactor protein 1A from Homo sapiens (Human).